A 572-amino-acid polypeptide reads, in one-letter code: Urease subunit alpha (572 aa).

Positions 131–572 (GGIDAHIHFI…LPLAQRYFLF (442 aa)) constitute a Urease domain. Residues His136, His138, and Lys219 each coordinate Ni(2+). Lys219 is subject to N6-carboxylysine. His221 is a substrate binding site. Ni(2+) contacts are provided by His248 and His274. Residue His322 is the Proton donor of the active site. Residue Asp362 participates in Ni(2+) binding.

This sequence belongs to the metallo-dependent hydrolases superfamily. Urease alpha subunit family. Heterotrimer of UreA (gamma), UreB (beta) and UreC (alpha) subunits. Three heterotrimers associate to form the active enzyme. The cofactor is Ni cation. Post-translationally, carboxylation allows a single lysine to coordinate two nickel ions.

The protein resides in the cytoplasm. The catalysed reaction is urea + 2 H2O + H(+) = hydrogencarbonate + 2 NH4(+). It functions in the pathway nitrogen metabolism; urea degradation; CO(2) and NH(3) from urea (urease route): step 1/1. The chain is Urease subunit alpha from Thermosynechococcus vestitus (strain NIES-2133 / IAM M-273 / BP-1).